Consider the following 173-residue polypeptide: VQ motif-containing protein 31 (173 aa).

The short motif at F27 to G36 is the VQ element. A Phosphothreonine modification is found at T46. Disordered regions lie at residues E76 to V105 and L143 to P173. Positions P86–V105 are enriched in polar residues. S92, S103, S146, and S149 each carry phosphoserine. A compositionally biased stretch (low complexity) spans T154 to T165. T165 bears the Phosphothreonine mark. A phosphoserine mark is found at S166 and S170.

In terms of processing, phosphorylated on serine and threonine residues by MPK6.

The protein resides in the nucleus. In terms of biological role, may modulate WRKY transcription factor activities. The protein is VQ motif-containing protein 31 of Arabidopsis thaliana (Mouse-ear cress).